The primary structure comprises 580 residues: Zinc finger CCCH domain-containing protein 47 (580 aa).

2 ANK repeats span residues 72 to 102 and 107 to 139; these read EERT…DVNR and ERVT…LVNS. C3H1-type zinc fingers lie at residues 251–278 and 286–310; these read PYTC…HGVF and QYKT…HKRE. The tract at residues 421-451 is disordered; the sequence is YVSSPSRNSQMGQNMNQHYPSSPVRQPPSQH.

In terms of tissue distribution, expressed in roots and anthers.

The protein resides in the nucleus. Its function is as follows. Involved in salt stress response. May positively modulate plant tolerance to salt stress. The sequence is that of Zinc finger CCCH domain-containing protein 47 from Arabidopsis thaliana (Mouse-ear cress).